A 182-amino-acid chain; its full sequence is Sperm acrosome-associated protein 7 (182 aa).

A signal peptide spans 1 to 24; it reads MAANRGSRTFLSVFLLCCWQGAEL. Residue Asn-40 is glycosylated (N-linked (GlcNAc...) asparagine). Positions 112-140 are enriched in basic and acidic residues; it reads LPTKEESGKNDRSTVANLHDHSSQTKHEP. The tract at residues 112–154 is disordered; sequence LPTKEESGKNDRSTVANLHDHSSQTKHEPPSSPEGKGSSNDDV.

In terms of tissue distribution, testis-specific. Expressed in zygotene and pachytene spermatocytes, round spermatids, elongating spermatids and spermatozoa (at protein level). Testis-specific.

It is found in the secreted. The protein localises to the cytoplasmic vesicle. The protein resides in the secretory vesicle. Its subcellular location is the acrosome lumen. In terms of biological role, involved in fertilization. Seems not to play a direct role in sperm-egg binding or gamete fusion. In Mus musculus (Mouse), this protein is Sperm acrosome-associated protein 7.